Reading from the N-terminus, the 965-residue chain is MANRNLEKLASIDAHLRLLVPGKVSEDDKLIEYDALLLDKFLDILQDLHGEDLKETVQECYELSAEYEGKRDPKKLEELGSVLTSLDPGDSIVIAKAFSHMLNLANLAEEVQIAYRRRIKLKKGDFADEAHATTESDMEETLKKLVYKLNKSPEEVFDALKNQTVDLVLTAHPTQSVRRSLLQKHGRIRNCLAQLYAKDITPDDKQELDEALHREIQAAFRTDEIRRTQPTPQDEMRAGMSYFHETIWKGVPKFLRRVDTALKNIGINERVPYNAPLIQFSSWMGGDRDGNPRVTPEVTRDVCLLARMMAANMYFSQIEDLMFEMSMWRCTDELRVRAEELFRTARRDVKHYIEFWKQVPPTEPYRVILGDVRDKLYNTRERARHLLAHDISDIPEEAVYTNVEQFLEPLELCYRSLCACGDRVIADGSLLDFLRQVSTFGLSLVKLDIRQESDRHTDVLDAITQHLEIGSYREWSEEKRQEWLLAELSGKRPLFGSDLPKTEEIKDVLDTFNVLAELPSDCFGAYIISMATSPSDVLAVELLQRECHVKQPLRVVPLFEKLADLEAAPAAMARLFSIDWYKNRINGKQEVMIGYSDSGKDAGRFSAAWQLYKAQEELKNVAKEFGVKLVMFHGRGGTVGRGGGPTHLAILSQPPDTIQGSLRVTVQGEVIEQSFGEEHLCFRTLQRFCAATLEHGMNPPISPRPEWRELMDQMAVVATEQYRSIVFKEPRFVEYFRLATPELEYGRMNIGSRPSKRKPSGGIESLRAIPWIFAWTQTRFHLPVWLGFGAAFKQAIQKDSKNLQMLQEMYKTWPFFRVTIDLVEMVFAKGDPGIAALNDKLLVSEDLWPFGESLRANYEETKDYLLKIAGHKDLLEGDPYLKQRLKLRDSYITTLNVCQAYTLKRTRDPNYHVTLRPHISKEYAEPSKPADELIHLNPTSEYAPGLEDTLILTMKGIAAGMQNTG.

S11 bears the Phosphoserine mark. The active site involves H172. D-glucose 6-phosphate-binding residues include W283, R450, and D597. The active site involves K600. Residue R635 coordinates D-glucose 6-phosphate. The active site involves R641. R641 is an L-aspartate binding site. T665 contacts D-glucose 6-phosphate. L-aspartate is bound at residue Q673. D-glucose 6-phosphate contacts are provided by residues R753 and 767-769 (RAI). 3 residues coordinate L-aspartate: K829, R888, and N963.

This sequence belongs to the PEPCase type 1 family. In terms of assembly, homotetramer. It depends on Mg(2+) as a cofactor. Expressed in roots and stems and at low levels in leaves. Preferentially expressed in the phloem and in root tips.

It is found in the cytoplasm. The enzyme catalyses oxaloacetate + phosphate = phosphoenolpyruvate + hydrogencarbonate. Its activity is regulated as follows. Activated by the allosteric regulator glucose-6-phosphate. Inhibited by malate and aspartate. Up regulated by light-reversible phosphorylation. Its function is as follows. Through the carboxylation of phosphoenolpyruvate (PEP) it forms oxaloacetate, a four-carbon dicarboxylic acid source for the tricarboxylic acid cycle. May be involved in phloem loading with sucrose and in anions and cations uptake and amino acid biosynthesis in roots. The chain is Phosphoenolpyruvate carboxylase 1 from Flaveria trinervia (Clustered yellowtops).